Consider the following 212-residue polypeptide: Adenylate kinase (212 aa).

10–15 contacts ATP; the sequence is GAGKGT. Positions 30–59 are NMP; it reads STGDMFRAAMVNQTEMGVLAKSYIDKGELV. AMP is bound by residues T31, R36, 57 to 59, 86 to 89, and Q93; these read ELV and GYPR. Residues 127–159 form an LID region; that stretch reads GRIIHRVTGETFHKVFNPPVDYKEEDYYQREDD. ATP-binding positions include R128 and 137-138; that span reads TF. AMP contacts are provided by R156 and R167. ATP is bound at residue Q195.

It belongs to the adenylate kinase family. Monomer.

It is found in the cytoplasm. It carries out the reaction AMP + ATP = 2 ADP. Its pathway is purine metabolism; AMP biosynthesis via salvage pathway; AMP from ADP: step 1/1. Its function is as follows. Catalyzes the reversible transfer of the terminal phosphate group between ATP and AMP. Plays an important role in cellular energy homeostasis and in adenine nucleotide metabolism. The polypeptide is Adenylate kinase (Streptococcus pneumoniae (strain 70585)).